Reading from the N-terminus, the 347-residue chain is MKDENSINFLSSNENYLYDKSENELRPKVFEDFKGQANVKETLSIFIRASKERDEALDHVFLSGPPGLGKTTLASIIAFEMNASIKITSAPAFDKPKDIIGILTGLDEKSVLFIDEIHRLRPIIEEMLCIAMEDYELDWVIGQGANARTVRMPLPKFTLIGATTKPGKVTSPLYARFGITARFELYSEIELVEIIKRNSIILNIEIEEDAAFLLARSSRGTPRIANRLLRRIRDIAQVTGSLVVTSDIVAIGLEMLRIDGEGLDEQDRNILRSLILKFNGGPVGVDTLAISVGETADSLEDFYEPYLIMKGFISRTHRGRKATEFAYLHLNLEMKEDNLNENQRVSF.

The tract at residues 1-186 is large ATPase domain (RuvB-L); that stretch reads MKDENSINFL…FGITARFELY (186 aa). Residues Leu-25, Arg-26, Gly-67, Lys-70, Thr-71, Thr-72, 133 to 135, Arg-176, Tyr-186, and Arg-223 each bind ATP; that span reads EDY. Thr-71 is a binding site for Mg(2+). The tract at residues 187–257 is small ATPAse domain (RuvB-S); that stretch reads SEIELVEIIK…IVAIGLEMLR (71 aa). A head domain (RuvB-H) region spans residues 260–347; it reads GEGLDEQDRN…NLNENQRVSF (88 aa). DNA is bound by residues Arg-315 and Arg-320.

It belongs to the RuvB family. As to quaternary structure, homohexamer. Forms an RuvA(8)-RuvB(12)-Holliday junction (HJ) complex. HJ DNA is sandwiched between 2 RuvA tetramers; dsDNA enters through RuvA and exits via RuvB. An RuvB hexamer assembles on each DNA strand where it exits the tetramer. Each RuvB hexamer is contacted by two RuvA subunits (via domain III) on 2 adjacent RuvB subunits; this complex drives branch migration. In the full resolvosome a probable DNA-RuvA(4)-RuvB(12)-RuvC(2) complex forms which resolves the HJ.

The protein localises to the cytoplasm. The enzyme catalyses ATP + H2O = ADP + phosphate + H(+). In terms of biological role, the RuvA-RuvB-RuvC complex processes Holliday junction (HJ) DNA during genetic recombination and DNA repair, while the RuvA-RuvB complex plays an important role in the rescue of blocked DNA replication forks via replication fork reversal (RFR). RuvA specifically binds to HJ cruciform DNA, conferring on it an open structure. The RuvB hexamer acts as an ATP-dependent pump, pulling dsDNA into and through the RuvAB complex. RuvB forms 2 homohexamers on either side of HJ DNA bound by 1 or 2 RuvA tetramers; 4 subunits per hexamer contact DNA at a time. Coordinated motions by a converter formed by DNA-disengaged RuvB subunits stimulates ATP hydrolysis and nucleotide exchange. Immobilization of the converter enables RuvB to convert the ATP-contained energy into a lever motion, pulling 2 nucleotides of DNA out of the RuvA tetramer per ATP hydrolyzed, thus driving DNA branch migration. The RuvB motors rotate together with the DNA substrate, which together with the progressing nucleotide cycle form the mechanistic basis for DNA recombination by continuous HJ branch migration. Branch migration allows RuvC to scan DNA until it finds its consensus sequence, where it cleaves and resolves cruciform DNA. The polypeptide is Holliday junction branch migration complex subunit RuvB (Borreliella afzelii (strain PKo) (Borrelia afzelii)).